The chain runs to 174 residues: Regenerating islet-derived protein 3-gamma (174 aa).

The N-terminal stretch at 1-26 is a signal peptide; sequence MLPRVALTTMSWMLLSSLMLLSQVQG. The propeptide occupies 27-37; it reads EDAKEDVPTSR. 3 cysteine pairs are disulfide-bonded: cysteine 40/cysteine 51, cysteine 68/cysteine 170, and cysteine 145/cysteine 162. The 125-residue stretch at 47–171 folds into the C-type lectin domain; it reads YGSYCYALFS…CISELPYVCK (125 aa). The tract at residues 103-118 is sufficient to activate EXTL3; that stretch reads WIGLHDPTLGQEPNRG. Zn(2+) is bound at residue histidine 107. Positions 114-116 match the EPN motif; it reads EPN. Zn(2+) is bound by residues glutamate 121 and histidine 144.

As to quaternary structure, forms a hexameric membrane-permeabilizing oligomeric pore on membrane phospholipids. The hexamer is formed by three dimers related by helical symmetry. Forms filaments, filamentation traps pore complexes and limits damage to host cells. Interacts with EXTL3. Post-translationally, proteolytic processing by trypsin removes an inhibitory N-terminal propeptide and is essential for peptidoglycan binding and antibacterial activity. In terms of tissue distribution, expressed in injured skeletal muscles and sciatic nerve (at protein level). Expressed in the pancreas. Expression increases during the acute phase of pancreatitis.

The protein localises to the secreted. Its subcellular location is the cytoplasm. Lipopolysaccharide inhibits pore-forming activity, explaining why is bactericidal for Gram-positive but not Gram-negative bacteria. Bactericidal C-type lectin which acts exclusively against Gram-positive bacteria and mediates bacterial killing by binding to surface-exposed carbohydrate moieties of peptidoglycan. Restricts bacterial colonization of the intestinal epithelial surface and consequently limits activation of adaptive immune responses by the microbiota. Functionally, acts as a hormone in response to different stimuli like anti-inflammatory signals, such as IL17A, or gut microbiome. Is secreted by different cell types to activate its receptor EXTL3 and induce cell specific signaling pathways. Induced by IL17A in keratinocytes, regulates keratinocyte proliferation and differentiation after skin injury. In parallel, inhibits skin inflammation through the inhibition of inflammatory cytokines such as IL6 and TNF. Induced by IL22 in lung epithelial cells, inhibits cytokine production and regulates allergic airway inflammation. Induced in small intestine by inulin-enriched diet and Lactobacillus gasseri enriched microbiome, plays a role in the improvement of gut barrier function, the regulation of energy balance and glucose levels. Modulates microbiota composition in duodenal contents. Produced by nociceptor in response to endotoxins, prevents endotoxic death by targeting kynurenine pathway in microglia. Its function is as follows. Has bacteriostatic activity. In terms of biological role, has bactericidal activity against L.monocytogenes and methicillin-resistant S.aureus. In Rattus norvegicus (Rat), this protein is Regenerating islet-derived protein 3-gamma.